Reading from the N-terminus, the 238-residue chain is 1-(5-phosphoribosyl)-5-[(5-phosphoribosylamino)methylideneamino] imidazole-4-carboxamide isomerase (238 aa).

Catalysis depends on Asp8, which acts as the Proton acceptor. Asp129 functions as the Proton donor in the catalytic mechanism.

Belongs to the HisA/HisF family.

Its subcellular location is the cytoplasm. The enzyme catalyses 1-(5-phospho-beta-D-ribosyl)-5-[(5-phospho-beta-D-ribosylamino)methylideneamino]imidazole-4-carboxamide = 5-[(5-phospho-1-deoxy-D-ribulos-1-ylimino)methylamino]-1-(5-phospho-beta-D-ribosyl)imidazole-4-carboxamide. The protein operates within amino-acid biosynthesis; L-histidine biosynthesis; L-histidine from 5-phospho-alpha-D-ribose 1-diphosphate: step 4/9. This is 1-(5-phosphoribosyl)-5-[(5-phosphoribosylamino)methylideneamino] imidazole-4-carboxamide isomerase from Lacticaseibacillus paracasei (strain ATCC 334 / BCRC 17002 / CCUG 31169 / CIP 107868 / KCTC 3260 / NRRL B-441) (Lactobacillus paracasei).